Reading from the N-terminus, the 587-residue chain is ATP-dependent lipid A-core flippase (587 aa).

The next 5 membrane-spanning stretches (helical) occupy residues 31–51 (LIAS…LIYL), 68–88 (LKIM…TNFI), 145–165 (GSLI…AVMF), 169–189 (WELT…ITIV), and 259–279 (VQII…TPLI). The ABC transmembrane type-1 domain maps to 32–315 (IASGIALVFN…LTNVNSQFQR (284 aa)). An ABC transporter domain is found at 347-583 (LEFKNVSFAY…NGAYKQLYSM (237 aa)). 381-388 (GRSGSGKS) contributes to the ATP binding site.

The protein belongs to the ABC transporter superfamily. Lipid exporter (TC 3.A.1.106) family. As to quaternary structure, homodimer.

The protein localises to the cell inner membrane. It carries out the reaction ATP + H2O + lipid A-core oligosaccharideSide 1 = ADP + phosphate + lipid A-core oligosaccharideSide 2.. Functionally, involved in lipopolysaccharide (LPS) biosynthesis. Translocates lipid A-core from the inner to the outer leaflet of the inner membrane. Transmembrane domains (TMD) form a pore in the inner membrane and the ATP-binding domain (NBD) is responsible for energy generation. This is ATP-dependent lipid A-core flippase from Haemophilus influenzae (strain 86-028NP).